We begin with the raw amino-acid sequence, 375 residues long: cAMP-dependent protein kinase regulatory subunit (375 aa).

A dimerization and phosphorylation region spans residues 28-142 (RFCADYFNER…SLYKSVSHNF (115 aa)). Basic and acidic residues predominate over residues 41–50 (REEADDDGPR). A disordered region spans residues 41-102 (REEADDDGPR…EPAAPFTRRT (62 aa)). Positions 64-82 (GSSSRSTDGSLFRSSFADT) are enriched in polar residues. The segment covering 83–97 (SSEGPGSASSEPAAP) has biased composition (low complexity). Serine 103 carries the post-translational modification Phosphoserine. 3',5'-cyclic AMP-binding positions include 143 to 258 (LFGN…FLKE), glutamate 208, arginine 217, 261 to 375 (ILSD…DPTK), glutamate 328, and arginine 337.

This sequence belongs to the cAMP-dependent kinase regulatory chain family. Tetramer, composed of 2 regulatory (R) and 2 catalytic (C) subunits. In the presence of cAMP it dissociates into 2 active monomeric C subunits and an R dimer.

In Yarrowia lipolytica (strain CLIB 122 / E 150) (Yeast), this protein is cAMP-dependent protein kinase regulatory subunit (PKAR).